A 651-amino-acid chain; its full sequence is Threonine--tRNA ligase (651 aa).

The region spanning Met-1–Thr-64 is the TGS domain. A catalytic region spans residues Asp-245 to Pro-535. 3 residues coordinate Zn(2+): Cys-336, His-387, and His-512.

This sequence belongs to the class-II aminoacyl-tRNA synthetase family. In terms of assembly, homodimer. It depends on Zn(2+) as a cofactor.

Its subcellular location is the cytoplasm. It carries out the reaction tRNA(Thr) + L-threonine + ATP = L-threonyl-tRNA(Thr) + AMP + diphosphate + H(+). Its function is as follows. Catalyzes the attachment of threonine to tRNA(Thr) in a two-step reaction: L-threonine is first activated by ATP to form Thr-AMP and then transferred to the acceptor end of tRNA(Thr). Also edits incorrectly charged L-seryl-tRNA(Thr). The protein is Threonine--tRNA ligase of Symbiobacterium thermophilum (strain DSM 24528 / JCM 14929 / IAM 14863 / T).